Reading from the N-terminus, the 264-residue chain is ORC1-type DNA replication protein 2 (264 aa).

ATP-binding positions include 73-77 (TGKSL), Y220, and R232.

This sequence belongs to the CDC6/cdc18 family.

Functionally, involved in regulation of DNA replication. In Halobacterium salinarum (strain ATCC 700922 / JCM 11081 / NRC-1) (Halobacterium halobium), this protein is ORC1-type DNA replication protein 2 (orc2).